The chain runs to 133 residues: ATP synthase epsilon chain, chloroplastic (133 aa).

It belongs to the ATPase epsilon chain family. As to quaternary structure, F-type ATPases have 2 components, CF(1) - the catalytic core - and CF(0) - the membrane proton channel. CF(1) has five subunits: alpha(3), beta(3), gamma(1), delta(1), epsilon(1). CF(0) has three main subunits: a, b and c.

Its subcellular location is the plastid. It localises to the chloroplast thylakoid membrane. Functionally, produces ATP from ADP in the presence of a proton gradient across the membrane. The protein is ATP synthase epsilon chain, chloroplastic of Chara vulgaris (Common stonewort).